The chain runs to 304 residues: Acetylglutamate kinase (304 aa).

Substrate is bound by residues Gly-70–Gly-71, Arg-92, and Asn-196.

This sequence belongs to the acetylglutamate kinase family. ArgB subfamily.

It is found in the cytoplasm. It catalyses the reaction N-acetyl-L-glutamate + ATP = N-acetyl-L-glutamyl 5-phosphate + ADP. The protein operates within amino-acid biosynthesis; L-arginine biosynthesis; N(2)-acetyl-L-ornithine from L-glutamate: step 2/4. Catalyzes the ATP-dependent phosphorylation of N-acetyl-L-glutamate. This is Acetylglutamate kinase from Methanococcoides burtonii (strain DSM 6242 / NBRC 107633 / OCM 468 / ACE-M).